A 177-amino-acid chain; its full sequence is Outer membrane lipoprotein Blc (177 aa).

The signal sequence occupies residues 1–18 (MRILPVVAAVTAAFLVVA). A lipid anchor (N-palmitoyl cysteine) is attached at Cys-19. Cys-19 is lipidated: S-diacylglycerol cysteine.

Belongs to the calycin superfamily. Lipocalin family. As to quaternary structure, homodimer.

It is found in the cell outer membrane. Its function is as follows. Involved in the storage or transport of lipids necessary for membrane maintenance under stressful conditions. Displays a binding preference for lysophospholipids. This chain is Outer membrane lipoprotein Blc, found in Citrobacter freundii.